The sequence spans 637 residues: Glutamate--cysteine ligase catalytic subunit (637 aa).

Residue Met1 is modified to N-acetylmethionine. Phosphoserine occurs at positions 5 and 8.

The protein belongs to the glutamate--cysteine ligase type 3 family. Heterodimer of a catalytic heavy chain and a regulatory light chain.

The catalysed reaction is L-cysteine + L-glutamate + ATP = gamma-L-glutamyl-L-cysteine + ADP + phosphate + H(+). It carries out the reaction (2S)-2-aminobutanoate + L-glutamate + ATP = gamma-L-glutamyl-(2S)-2-aminobutanoate + ADP + phosphate + H(+). The protein operates within sulfur metabolism; glutathione biosynthesis; glutathione from L-cysteine and L-glutamate: step 1/2. Feedback inhibition by glutathione. Its function is as follows. Catalyzes the ATP-dependent ligation of L-glutamate and L-cysteine and participates in the first and rate-limiting step in glutathione biosynthesis. This chain is Glutamate--cysteine ligase catalytic subunit, found in Homo sapiens (Human).